Consider the following 868-residue polypeptide: LPS-assembly protein LptD (868 aa).

Residues 1 to 24 form the signal peptide; sequence MLKGIHKYLLMCFGTVLFTVQANA.

The protein belongs to the LptD family. As to quaternary structure, component of the lipopolysaccharide transport and assembly complex. Interacts with LptE and LptA.

The protein localises to the cell outer membrane. In terms of biological role, together with LptE, is involved in the assembly of lipopolysaccharide (LPS) at the surface of the outer membrane. This is LPS-assembly protein LptD from Francisella tularensis subsp. novicida (strain U112).